A 543-amino-acid chain; its full sequence is MAKQILYGEEARRSMQKGVDKLADTVKVTLGPKGRNVVLDKKFGAPLITNDGVSIAKEIELEDPYENMGAQLVKEVATKTNDVAGDGTTTATLLAQAIIREGLKNVTAGANPMLIRNGIRLAVDKTVEGLKKVSKNVNGKEDIARVASISAADPEIGKLIADAMEKVGNEGVITVEESKSMGTELDVVEGMQFDRGYLSPYMVTDQEKMEAVLDDPYILITDKKIANIQEILPLLEQIVQQGKKLLIIADDVEGEALATLVVNKLRGTFNCVAVKAPGFGDRRKDMLRDIAILTGGEVISEELGKDLKDVKVEDLGSAESVKISKENTTIVNGRGDKSAIHDRVAQIRGQIEETTSDFDREKLQERLAKLAGGVAVVKVGAASETELKERKMRIEDALAATKAAVEEGIIAGGGTAYINVLPEVRELTSDEPDVQVGINIIVKALEEPVRQIAANAGLEGSVIIEKIINSEKGIGFDALHEKYVDMLSVGIVDPTKVTRSALQNAASVASTFLTTECAVADIPEKDKPEMPGGAPGMGMGGMY.

Residues Thr-29–Pro-32, Asp-86–Thr-90, Gly-413, Asp-477–Leu-479, and Asp-493 each bind ATP. Positions Glu-524 to Tyr-543 are disordered. Gly residues predominate over residues Gly-533–Tyr-543.

Belongs to the chaperonin (HSP60) family. In terms of assembly, forms a cylinder of 14 subunits composed of two heptameric rings stacked back-to-back. Interacts with the co-chaperonin GroES.

It is found in the cytoplasm. The enzyme catalyses ATP + H2O + a folded polypeptide = ADP + phosphate + an unfolded polypeptide.. In terms of biological role, together with its co-chaperonin GroES, plays an essential role in assisting protein folding. The GroEL-GroES system forms a nano-cage that allows encapsulation of the non-native substrate proteins and provides a physical environment optimized to promote and accelerate protein folding. The protein is Chaperonin GroEL of Clostridium acetobutylicum (strain ATCC 824 / DSM 792 / JCM 1419 / IAM 19013 / LMG 5710 / NBRC 13948 / NRRL B-527 / VKM B-1787 / 2291 / W).